We begin with the raw amino-acid sequence, 284 residues long: Tropomyosin (284 aa).

The stretch at 1–273 (MEAIKKKMQA…KEKYKSISDE (273 aa)) forms a coiled coil.

It belongs to the tropomyosin family. As to quaternary structure, homodimer. In terms of tissue distribution, ubiquitous, but especially prevalent in the anterior muscle bundles associated with legs. Expression in the mid and posterior regions is probably related to the numerous, small muscle bundles associated with the digestive and reproductive systems (at protein level).

Functionally, tropomyosin, in association with the troponin complex, plays a central role in the calcium dependent regulation of muscle contraction. This Psoroptes ovis (Sheep scab mite) protein is Tropomyosin.